Reading from the N-terminus, the 403-residue chain is RILP-like protein 1 (403 aa).

Serine 7 carries the post-translational modification Phosphoserine. The RH1 domain occupies 10–97 (AAESALEKNV…RLERMDRIEK (88 aa)). Cysteine 47 is subject to S-nitrosocysteine. A coiled-coil region spans residues 76 to 265 (ELDELRLELD…GELNQNGEEE (190 aa)). Residues 291–356 (RPRFTLQELR…PQPESGIKRL (66 aa)) form the RH2 domain. Residues 329-348 (EEENQIPQPPPIAHPRMSPQ) form a disordered region.

The protein belongs to the RILPL family. Interacts (when S-nitrosylated) with GAPDH. Interacts with RAB8A; interaction is dependent on the phosphorylation of 'Thr-72' of RAB8A. Interacts with RAB10 and RAB12; the interaction is dependent on the phosphorylation of 'Thr-73' of RAB10, and 'Ser-105' of RAB12. In terms of processing, S-nitrosylation is required for the interaction with GAPDH.

It localises to the cytoplasm. The protein localises to the cytosol. The protein resides in the cytoskeleton. It is found in the microtubule organizing center. Its subcellular location is the centrosome. It localises to the centriole. The protein localises to the cilium basal body. In terms of biological role, plays a role in the regulation of cell shape and polarity. Plays a role in cellular protein transport, including protein transport away from primary cilia. Neuroprotective protein, which acts by sequestring GAPDH in the cytosol and prevent the apoptotic function of GAPDH in the nucleus. Competes with SIAH1 for binding GAPDH. Does not regulate lysosomal morphology and distribution. Binds to RAB10 following LRRK2-mediated RAB10 phosphorylation which leads to inhibition of ciliogenesis. The sequence is that of RILP-like protein 1 (RILPL1) from Bos taurus (Bovine).